Reading from the N-terminus, the 784-residue chain is Cell wall protein Lmo0130 (784 aa).

An N-terminal signal peptide occupies residues 1-34 (MKVNKFFKKTTHVLLVAGLTIGLTAPFTGTTAQA). The tract at residues 690-761 (ATTPPDNGNG…NTSLPTTGDT (72 aa)) is disordered. Over residues 697 to 729 (GNGGTDNGNGNGNNGGTDGNGGTNNGNGSGTNG) the composition is skewed to gly residues. Residues 730–759 (GTTTTEDPTTTTSNTSTTGTSSNTSLPTTG) show a composition bias toward low complexity. Residues 755–759 (LPTTG) carry the LPXTG sorting signal motif. Residue threonine 758 is modified to Pentaglycyl murein peptidoglycan amidated threonine. The propeptide at 759–784 (GDTAGLATVFGVILTTTALYVLRKRS) is removed by sortase A.

The protein localises to the secreted. Its subcellular location is the cell wall. This Listeria monocytogenes serovar 1/2a (strain ATCC BAA-679 / EGD-e) protein is Cell wall protein Lmo0130.